Consider the following 181-residue polypeptide: MLIFKDAFTDDELASDSFPMKLVDGLIWEFKGRQVVRREGEIQLAGANPSAEGEDGDEGSEECVERGIDFVLNHRLQEMNCYEDLVTFKSYCKSFMKKVVELMQKNGKSEAEISEFKRKIPAWVVSLLSKDRFKQLQFFIGERMAEGQGEGQVAVVEYRDEEDGEVPYLMLVKEALIEEKQ.

The region spanning 1–181 (MLIFKDAFTD…VKEALIEEKQ (181 aa)) is the TCTP domain.

This sequence belongs to the TCTP family.

It localises to the cytoplasm. Involved in calcium binding and microtubule stabilization. The sequence is that of Translationally-controlled tumor protein homolog from Brugia malayi (Filarial nematode worm).